We begin with the raw amino-acid sequence, 163 residues long: Putative H/ACA ribonucleoprotein complex subunit 2-like protein (163 aa).

The segment at 1–27 is disordered; sequence MGKRNLDETMNESTVSEANGDATAPTT.

The protein belongs to the eukaryotic ribosomal protein eL8 family. In terms of assembly, component of the small nucleolar ribonucleoprotein particle containing H/ACA-type snoRNAs (H/ACA snoRNPs).

The protein localises to the nucleus. Its subcellular location is the nucleolus. Required for ribosome biogenesis. Part of a complex which catalyzes pseudouridylation of rRNA. This involves the isomerization of uridine such that the ribose is subsequently attached to C5, instead of the normal N1. Pseudouridine ('psi') residues may serve to stabilize the conformation of rRNAs. This chain is Putative H/ACA ribonucleoprotein complex subunit 2-like protein, found in Caenorhabditis elegans.